Consider the following 315-residue polypeptide: DDRGK domain-containing protein 1 (315 aa).

The helical transmembrane segment at Met-1–Ala-28 threads the bilayer. Residues Met-1–Thr-115 form a mediates interaction with CDK5RAP3 region. Over Ala-29 to Ala-315 the chain is Cytoplasmic. The disordered stretch occupies residues Ala-30–Arg-184. Basic and acidic residues predominate over residues Glu-34 to Ala-43. Ser-73 is subject to Phosphoserine. Residues Gly-119–Leu-217 are mediates interaction with TRIP4. Basic and acidic residues predominate over residues Lys-125 to Arg-184. The UFM1-interacting motif (UFIM) signature appears at Ala-196 to Glu-210. Residues Leu-217–Ala-315 are mediates interaction with UFL1. The region spanning Val-230–Pro-274 is the PCI domain. Lys-268 participates in a covalent cross-link: Glycyl lysine isopeptide (Lys-Gly) (interchain with G-Cter in UFM1).

It belongs to the DDRGK1 family. Component of the UFM1 ribosome E3 ligase (UREL) complex, composed of UFL1, DDRGK1 and CDK5RAP3. Interacts with (unphosphorylated) ERN1/IRE1-alpha; interaction is dependent on UFM1 and takes place in response to endoplasmic reticulum stress, regulating ERN1/IRE1-alpha stability. Interacts with NFKBIA. Interacts with SOX9. Post-translationally, ufmylated; conjugated to ubiquitin-like protein UFM1, probably at Lys-268 by UFL1. The relevance of ufmylation is however unclear: as DDRGK1 acts as a substrate adapter for ufmylation, it is uncertain whether ufmylation is a collateral effect of the ufmylation process or whether it is required to regulate its activity. Ubiquitinated. Ubiquitination probably triggers proteasomal degradation and is negatively regulated by UFL1, the enzyme involved in the ufmylation of DDRGK1. In terms of tissue distribution, ubiquitously expressed. Higher expression in pancreatic islets, pancreatic acini and testis (at protein level). Highly expressed in the intestinal exocrine cells.

The protein localises to the endoplasmic reticulum membrane. Functionally, component of the UFM1 ribosome E3 ligase (UREL) complex, a multiprotein complex that catalyzes ufmylation of endoplasmic reticulum-docked proteins. The UREL complex plays a key role in ribosome recycling by mediating mono-ufmylation of the RPL26/uL24 subunit of the 60S ribosome following ribosome dissociation: ufmylation weakens the junction between post-termination 60S subunits and SEC61 translocons, promoting release and recycling of the large ribosomal subunit from the endoplasmic reticulum membrane. Ufmylation of RPL26/uL24 and subsequent 60S ribosome recycling either take place after normal termination of translation or after ribosome stalling during cotranslational translocation at the endoplasmic reticulum. Within the UREL complex, DDRGK1 tethers the complex to the endoplasmic reticulum membrane to restrict its activity to endoplasmic reticulum-docked ribosomes and acts as an ufmylation 'reader': following RPL26/uL24 ufmylation, DDRGK1 specifically binds to ufmylated RPL26/uL24 via its UFIM motif, resulting in stable association between the 60S ribosome and the UREL complex, followed by dissociation of the 60S ribosome subunit from the endoplasmic reticulum membrane. The UREL complex is also involved in reticulophagy in response to endoplasmic reticulum stress by promoting ufmylation of proteins such as CYB5R3 and RPN1, thereby promoting lysosomal degradation of ufmylated proteins. Ufmylation-dependent reticulophagy inhibits the unfolded protein response (UPR) by regulating ERN1/IRE1-alpha stability. Acts as a regulator of immunity by promoting differentiation of B-cells into plasma cells: acts by promoting expansion of the endoplasmic reticulum and regulating the unfolded protein response (UPR). May also be required for TRIP4 ufmylation. May play a role in NF-kappa-B-mediated transcription through regulation of the phosphorylation and the degradation of NFKBIA, the inhibitor of NF-kappa-B. Plays a role in cartilage development through SOX9, inhibiting the ubiquitin-mediated proteasomal degradation of this transcriptional regulator. Required for stabilization and ufmylation of ATG9A. The protein is DDRGK domain-containing protein 1 of Mus musculus (Mouse).